The chain runs to 554 residues: Chaperonin GroEL (554 aa).

Residues 29 to 32 (TLGP), Lys50, 86 to 90 (DGTTT), Gly414, and Asp495 contribute to the ATP site.

It belongs to the chaperonin (HSP60) family. As to quaternary structure, forms a cylinder of 14 subunits composed of two heptameric rings stacked back-to-back. Interacts with the co-chaperonin GroES.

It is found in the cytoplasm. It carries out the reaction ATP + H2O + a folded polypeptide = ADP + phosphate + an unfolded polypeptide.. Functionally, together with its co-chaperonin GroES, plays an essential role in assisting protein folding. The GroEL-GroES system forms a nano-cage that allows encapsulation of the non-native substrate proteins and provides a physical environment optimized to promote and accelerate protein folding. The chain is Chaperonin GroEL from Pelagibacter ubique (strain HTCC1062).